Consider the following 556-residue polypeptide: Urease subunit alpha 1 (556 aa).

Positions 127 to 556 constitute a Urease domain; the sequence is GAVDTHVHLL…SVSLNRLYFL (430 aa). H132, H134, and K212 together coordinate Ni(2+). Position 212 is an N6-carboxylysine (K212). A substrate-binding site is contributed by H214. Residues H241 and H267 each coordinate Ni(2+). Residue H315 is the Proton donor of the active site. D355 contacts Ni(2+).

It belongs to the metallo-dependent hydrolases superfamily. Urease alpha subunit family. In terms of assembly, may form a heterohexamer of 3 UreC (alpha) and 3 UreAB (gamma/beta) subunits. May also form a heterotrimer of UreA (gamma), UreB (beta) and UreC (alpha) subunits. Three heterotrimers associate to form the active enzyme. Requires Ni cation as cofactor. Carboxylation allows a single lysine to coordinate two nickel ions.

It localises to the cytoplasm. It carries out the reaction urea + 2 H2O + H(+) = hydrogencarbonate + 2 NH4(+). It participates in nitrogen metabolism; urea degradation; CO(2) and NH(3) from urea (urease route): step 1/1. The chain is Urease subunit alpha 1 from Streptomyces avermitilis (strain ATCC 31267 / DSM 46492 / JCM 5070 / NBRC 14893 / NCIMB 12804 / NRRL 8165 / MA-4680).